A 1430-amino-acid polypeptide reads, in one-letter code: Death-associated protein kinase 1 (1430 aa).

In terms of domain architecture, Protein kinase spans 13–275 (YDTGEELGSG…IQDSLQHPWI (263 aa)). Residues 19–27 (LGSGQFAVV), K42, 94–96 (ELV), and E100 each bind ATP. D139 (proton acceptor) is an active-site residue. D161 contacts ATP. A calmodulin-binding region spans residues 267–334 (QDSLQHPWIK…RSNMSVARSD (68 aa)). S289 carries the post-translational modification Phosphoserine; by RPS6KA1 and RPS6KA3. Residues 292–301 (NMEKFKKFAA) form an autoinhibitory domain region. S308 carries the phosphoserine; by autocatalysis modification. A phosphoserine mark is found at S319 and S333. ANK repeat units follow at residues 378-407 (HGTP…RIDV), 411-440 (GGSN…PLDV), 444-473 (SGEM…NPNI), 477-506 (EEET…NVNI), 510-539 (EGET…DLNA), 543-572 (DGHI…FVDY), 576-605 (HGNT…NLDI), and 609-638 (YGRT…SVEA). The region spanning 681-955 (TQNLQPRIKL…NHLQEIRSQI (275 aa)) is the Roc domain. At S734 the chain carries Phosphoserine; by MAPK1. The stretch at 875-904 (KLKNPLQVVLVATHADIMNVPRPAGGEFGY) is one ANK 9 repeat. S1115 is subject to Phosphoserine. The stretch at 1162 to 1196 (EGDADIRLWVNGCKLANRGAELLVLLVNHGQGIEV) is one ANK 10 repeat. Positions 1312 to 1396 (KLSRLLDPPD…DAADFLLKAS (85 aa)) constitute a Death domain.

This sequence belongs to the protein kinase superfamily. CAMK Ser/Thr protein kinase family. DAP kinase subfamily. In terms of assembly, interacts with KLHL20. Interacts (via death domain) with MAPK1 and MAPK3. Interacts with MAP1B (via N-terminus). Interacts with PRKD1 in an oxidative stress-regulated manner. Interacts with PIN1, PDCD6, BECN1, TSC2 and STX1A. Interacts (via kinase domain) with DAPK3 (via kinase domain). Interacts with GRINB. Interacts (via death domain) with UNC5B (via death domain). Interacts with UNC5C (via death domain). Requires Mg(2+) as cofactor. Post-translationally, ubiquitinated by the BCR(KLHL20) E3 ubiquitin ligase complex, leading to its degradation by the proteasome. In terms of processing, removal of the C-terminal tail of isoform 2 (corresponding to amino acids 296-337 of isoform 2) by proteolytic cleavage stimulates maximally its membrane-blebbing function. In response to mitogenic stimulation (PMA or EGF), phosphorylated at Ser-289; phosphorylation suppresses DAPK1 pro-apoptotic function. Autophosphorylation at Ser-308 inhibits its catalytic activity. Phosphorylation at Ser-734 by MAPK1 increases its catalytic activity and promotes cytoplasmic retention of MAPK1. Endoplasmic-stress can cause dephosphorylation at Ser-308. In terms of tissue distribution, isoform 2 is expressed in normal intestinal tissue as well as in colorectal carcinomas.

The protein localises to the cytoplasm. The protein resides in the cytoskeleton. The catalysed reaction is L-seryl-[protein] + ATP = O-phospho-L-seryl-[protein] + ADP + H(+). It catalyses the reaction L-threonyl-[protein] + ATP = O-phospho-L-threonyl-[protein] + ADP + H(+). With respect to regulation, activated by Ca(2+)/calmodulin. Regulated by a locking mechanism, involving autophosphorylation at Ser-308 and calmodulin binding. In the inactive state, Ser-308 is phosphorylated. Activation involves its dephosphorylation and a release-of-autoinhibition mechanism where binding of calmodulin induces a conformational change that relieves the steric block of the active site by the autoinhibitory domain. Activity is modulated by UNC5B and NTN1. UNC5B activates it by inhibiting the phosphorylation at Ser-308, whereas NTN1 inhibits UNC5B-mediated activation of DAPK1. Endoplasmic-stress activates by causing Ser-308 dephosphorylation. Its function is as follows. Calcium/calmodulin-dependent serine/threonine kinase involved in multiple cellular signaling pathways that trigger cell survival, apoptosis, and autophagy. Regulates both type I apoptotic and type II autophagic cell deaths signal, depending on the cellular setting. The former is caspase-dependent, while the latter is caspase-independent and is characterized by the accumulation of autophagic vesicles. Phosphorylates PIN1 resulting in inhibition of its catalytic activity, nuclear localization, and cellular function. Phosphorylates TPM1, enhancing stress fiber formation in endothelial cells. Phosphorylates STX1A and significantly decreases its binding to STXBP1. Phosphorylates PRKD1 and regulates JNK signaling by binding and activating PRKD1 under oxidative stress. Phosphorylates BECN1, reducing its interaction with BCL2 and BCL2L1 and promoting the induction of autophagy. Phosphorylates TSC2, disrupting the TSC1-TSC2 complex and stimulating mTORC1 activity in a growth factor-dependent pathway. Phosphorylates RPS6, MYL9 and DAPK3. Acts as a signaling amplifier of NMDA receptors at extrasynaptic sites for mediating brain damage in stroke. Cerebral ischemia recruits DAPK1 into the NMDA receptor complex and it phosphorylates GRINB at Ser-1303 inducing injurious Ca(2+) influx through NMDA receptor channels, resulting in an irreversible neuronal death. Required together with DAPK3 for phosphorylation of RPL13A upon interferon-gamma activation which is causing RPL13A involvement in transcript-selective translation inhibition. In terms of biological role, isoform 2 cannot induce apoptosis but can induce membrane blebbing. The sequence is that of Death-associated protein kinase 1 (DAPK1) from Homo sapiens (Human).